The chain runs to 371 residues: Carnitine monooxygenase oxygenase subunit (371 aa).

Residues 44 to 152 form the Rieske domain; the sequence is WICVAHGSEL…VEEYAGFVFI (109 aa). [2Fe-2S] cluster is bound by residues Cys86, His88, Cys106, and His109. His208, His213, and Asp323 together coordinate Fe cation.

Belongs to the bacterial ring-hydroxylating dioxygenase alpha subunit family. CntA subfamily. Composed of an oxygenase subunit and a reductase subunit. [2Fe-2S] cluster serves as cofactor. Fe cation is required as a cofactor.

The catalysed reaction is (R)-carnitine + NADH + O2 + H(+) = (3R)-3-hydroxy-4-oxobutanoate + trimethylamine + NAD(+) + H2O. It carries out the reaction (R)-carnitine + NADPH + O2 + H(+) = (3R)-3-hydroxy-4-oxobutanoate + trimethylamine + NADP(+) + H2O. Its pathway is amine and polyamine metabolism; carnitine metabolism. With respect to regulation, inhibited by EDTA. Functionally, converts carnitine to trimethylamine and malic semialdehyde. Acts on both enantiomers. In Acinetobacter pittii (strain PHEA-2), this protein is Carnitine monooxygenase oxygenase subunit.